The following is a 431-amino-acid chain: Adenylosuccinate synthetase (431 aa).

GTP contacts are provided by residues 13-19 (GDEGKGK) and 41-43 (GHT). Aspartate 14 functions as the Proton acceptor in the catalytic mechanism. Mg(2+) contacts are provided by aspartate 14 and glycine 41. IMP contacts are provided by residues 14 to 17 (DEGK), 39 to 42 (NAGH), threonine 130, arginine 144, glutamine 225, threonine 240, and arginine 304. The active-site Proton donor is histidine 42. 300–306 (SVTGRPR) contributes to the substrate binding site. Residues arginine 306, 332–334 (KLD), and 414–416 (STG) each bind GTP.

This sequence belongs to the adenylosuccinate synthetase family. Homodimer. Mg(2+) serves as cofactor.

It is found in the cytoplasm. The enzyme catalyses IMP + L-aspartate + GTP = N(6)-(1,2-dicarboxyethyl)-AMP + GDP + phosphate + 2 H(+). It participates in purine metabolism; AMP biosynthesis via de novo pathway; AMP from IMP: step 1/2. Its function is as follows. Plays an important role in the de novo pathway of purine nucleotide biosynthesis. Catalyzes the first committed step in the biosynthesis of AMP from IMP. This Bordetella avium (strain 197N) protein is Adenylosuccinate synthetase.